The primary structure comprises 762 residues: Pyrophosphate-energized vacuolar membrane proton pump (762 aa).

The Intravacuolar portion of the chain corresponds to 1 to 6 (MAILGE). Residues 7-33 (LGTEILIPVCGVIGIVFAVAQWFIVSK) traverse the membrane as a helical segment. Topologically, residues 34 to 81 (VKVTPGAASAAAGAKNGYGDYLIEEEEGLNDHNVVVKCAEIQTAISEG) are cytoplasmic. A helical membrane pass occupies residues 82-111 (ATSFLFTMYQYVGMFMVVFAAIIFLFLGSI). The Intravacuolar segment spans residues 112–131 (EGFSTKGQPCTYSKGTCKPA). Cys121 and Cys128 are disulfide-bonded. Residues 132-159 (LYTALFSTASFLLGAITSLVSGFLGMKI) traverse the membrane as a helical segment. The Cytoplasmic segment spans residues 160 to 182 (ATYANARTTLEARKGVGKAFITA). The chain crosses the membrane as a helical span at residues 183–212 (FRSGAVMGFLLSSSGLVVLYITINVFKMYY). Residues 213–215 (GDD) lie on the Intravacuolar side of the membrane. Residues 216–244 (WEGLFESITGYGLGGSSMALFGRVGGGIY) form a helical membrane-spanning segment. The Cytoplasmic portion of the chain corresponds to 245–282 (TKAADVGADLVGKVERNIPEDDPRNPAVIADNVGDNVG). Lys246 lines the substrate pocket. Residues Asp249, Asp253, and Asp279 each contribute to the Mg(2+) site. The chain crosses the membrane as a helical span at residues 283–308 (DIAGMGSDLFGSYAESSCAALVVASI). Over 309–316 (SSFGINHD) the chain is Intravacuolar. Residues 317 to 342 (FTAMCYPLLVSSVGIIVCLLTTLFAT) traverse the membrane as a helical segment. The Cytoplasmic portion of the chain corresponds to 343–350 (DFFEIKAA). Residues 351-378 (NEIEPALKKQLIISTALMTVGVAVISWL) traverse the membrane as a helical segment. The Intravacuolar segment spans residues 379-397 (ALPAKFTIFNFGAQKEVSN). Residues 398 to 421 (WGLFFCVAVGLWAGLIIGFVTEYY) form a helical membrane-spanning segment. Over 422-443 (TSNAYSPVQDVADSCRTGAATN) the chain is Cytoplasmic. The chain crosses the membrane as a helical span at residues 444–468 (VIFGLALGYKSVIIPIFAIAVSIYV). At 469–474 (SFSIAA) the chain is on the intravacuolar side. Residues 475–501 (MYGIAMAALGMLSTMATGLAIDAYGPI) traverse the membrane as a helical segment. Topologically, residues 502–530 (SDNAGGIAEMAGMSHRIRERTDALDAAGN) are cytoplasmic. Mg(2+)-binding residues include Asp503 and Asn530. Residues 531 to 559 (TTAAIGKGFAIGSAALVSLALFGAFVSRA) traverse the membrane as a helical segment. Residues 560–569 (GVKVVDVLSP) lie on the Intravacuolar side of the membrane. The helical transmembrane segment at 570 to 598 (KVFIGLIVGAMLPYWFSAMTMKSVGSAAL) threads the bilayer. Topologically, residues 599–627 (KMVEEVRRQFNTIPGLMEGTAKPDYATCV) are cytoplasmic. Residues 628-656 (KISTDASIKEMIPPGALVMLTPLIVGTLF) form a helical membrane-spanning segment. Residue Gly657 is a topological domain, intravacuolar. A helical membrane pass occupies residues 658 to 685 (VETLSGVLAGALVSGVQIAISASNTGGA). Topologically, residues 686–728 (WDNAKKYIEAGNSEHARSLGPKGSDCHKAAVIGDTIGDPLKDT) are cytoplasmic. Residues Asp687 and Asp723 each contribute to the Mg(2+) site. Lys726 is a substrate binding site. The chain crosses the membrane as a helical span at residues 729–754 (SGPSLNILIKLMAVESLVFAPFFATY). Topologically, residues 755-762 (GGLLFKYI) are intravacuolar.

This sequence belongs to the H(+)-translocating pyrophosphatase (TC 3.A.10) family. K(+)-stimulated subfamily. In terms of assembly, monomer.

Its subcellular location is the vacuole membrane. It catalyses the reaction diphosphate + H2O + H(+)(in) = 2 phosphate + 2 H(+)(out). In terms of biological role, contributes to the transtonoplast (from cytosol to vacuole lumen) H(+)-electrochemical potential difference. It establishes a proton gradient of similar and often greater magnitude than the H(+)-ATPase on the same membrane. This Hordeum vulgare (Barley) protein is Pyrophosphate-energized vacuolar membrane proton pump.